A 290-amino-acid polypeptide reads, in one-letter code: Ribonuclease 3 (290 aa).

The RNase III domain maps to 20–145 (YSCFYRILGF…FIGAIYLDRG (126 aa)). Position 62 (Glu62) interacts with Mg(2+). Residue Asp66 is part of the active site. The Mg(2+) site is built by Asn131 and Glu134. The active site involves Glu134. Positions 173 to 242 (NFKSKLIEWS…AQMTLKKIKG (70 aa)) constitute a DRBM domain. Residues 254 to 290 (KTQNNVPAEDTTPESEMSLTAENQQIDEIISTEEISV) form a disordered region. The span at 267-279 (ESEMSLTAENQQI) shows a compositional bias: polar residues.

This sequence belongs to the ribonuclease III family. Homodimer. The cofactor is Mg(2+).

Its subcellular location is the cytoplasm. The catalysed reaction is Endonucleolytic cleavage to 5'-phosphomonoester.. Functionally, digests double-stranded RNA. Involved in the processing of primary rRNA transcript to yield the immediate precursors to the large and small rRNAs (23S and 16S). Processes some mRNAs, and tRNAs when they are encoded in the rRNA operon. Processes pre-crRNA and tracrRNA of type II CRISPR loci if present in the organism. This Bacteroides fragilis (strain YCH46) protein is Ribonuclease 3.